The primary structure comprises 445 residues: Phosphoglucosamine mutase (445 aa).

The active-site Phosphoserine intermediate is the Ser102. Mg(2+) is bound by residues Ser102, Asp241, Asp243, and Asp245. Ser102 carries the post-translational modification Phosphoserine.

This sequence belongs to the phosphohexose mutase family. The cofactor is Mg(2+). In terms of processing, activated by phosphorylation.

The catalysed reaction is alpha-D-glucosamine 1-phosphate = D-glucosamine 6-phosphate. Catalyzes the conversion of glucosamine-6-phosphate to glucosamine-1-phosphate. This Aliivibrio salmonicida (strain LFI1238) (Vibrio salmonicida (strain LFI1238)) protein is Phosphoglucosamine mutase.